Consider the following 388-residue polypeptide: Succinate--CoA ligase [ADP-forming] subunit beta (388 aa).

An ATP-grasp domain is found at 9-244; that stretch reads KEIFRSMGVA…LEEEDPKEIE (236 aa). ATP contacts are provided by residues lysine 46, 53–55, glutamate 99, cysteine 102, and glutamate 107; that span reads GRG. The Mg(2+) site is built by asparagine 199 and aspartate 213. Residues asparagine 264 and 321–323 contribute to the substrate site; that span reads GIM.

Belongs to the succinate/malate CoA ligase beta subunit family. Heterotetramer of two alpha and two beta subunits. Mg(2+) serves as cofactor.

It carries out the reaction succinate + ATP + CoA = succinyl-CoA + ADP + phosphate. It catalyses the reaction GTP + succinate + CoA = succinyl-CoA + GDP + phosphate. Its pathway is carbohydrate metabolism; tricarboxylic acid cycle; succinate from succinyl-CoA (ligase route): step 1/1. Its function is as follows. Succinyl-CoA synthetase functions in the citric acid cycle (TCA), coupling the hydrolysis of succinyl-CoA to the synthesis of either ATP or GTP and thus represents the only step of substrate-level phosphorylation in the TCA. The beta subunit provides nucleotide specificity of the enzyme and binds the substrate succinate, while the binding sites for coenzyme A and phosphate are found in the alpha subunit. The protein is Succinate--CoA ligase [ADP-forming] subunit beta of Staphylococcus aureus (strain MRSA252).